The primary structure comprises 305 residues: uncharacterized protein (305 aa).

The next 3 membrane-spanning stretches (helical) occupy residues threonine 52–isoleucine 72, isoleucine 89–alanine 109, and valine 120–serine 140.

It belongs to the MscS (TC 1.A.23) family.

It is found in the cell membrane. This is an uncharacterized protein from Buchnera aphidicola subsp. Acyrthosiphon pisum (strain APS) (Acyrthosiphon pisum symbiotic bacterium).